Reading from the N-terminus, the 314-residue chain is Peroxidase 2 (314 aa).

A signal peptide spans 1-23 (MASASSVSLMLLVAAAMASAASA). The residue at position 24 (Gln24) is a Pyrrolidone carboxylic acid. Intrachain disulfides connect Cys34–Cys109, Cys67–Cys72, Cys115–Cys310, and Cys194–Cys219. His65 (proton acceptor) is an active-site residue. Residues Asp66, Val69, Gly71, Asp73, and Ser75 each contribute to the Ca(2+) site. The N-linked (GlcNAc...) asparagine glycan is linked to Asn148. A substrate-binding site is contributed by Pro157. N-linked (GlcNAc...) asparagine glycosylation is present at Asn169. His187 is a heme b binding site. Thr188 contributes to the Ca(2+) binding site. An N-linked (GlcNAc...) asparagine glycan is attached at Asn203. Ca(2+) contacts are provided by Asp234, Thr237, and Asp242. Residues Asn274 and Asn309 are each glycosylated (N-linked (GlcNAc...) asparagine).

Belongs to the peroxidase family. Classical plant (class III) peroxidase subfamily. The cofactor is Ca(2+). It depends on heme b as a cofactor.

The protein localises to the secreted. It carries out the reaction 2 a phenolic donor + H2O2 = 2 a phenolic radical donor + 2 H2O. Its function is as follows. Removal of H(2)O(2), oxidation of toxic reductants, biosynthesis and degradation of lignin, suberization, auxin catabolism, response to environmental stresses such as wounding, pathogen attack and oxidative stress. These functions might be dependent on each isozyme/isoform in each plant tissue. The sequence is that of Peroxidase 2 (PRX112) from Oryza sativa subsp. indica (Rice).